The following is a 648-amino-acid chain: Beta-glucuronidase (648 aa).

A signal peptide spans 1–22; sequence MSPRRSVCWFVLGQLLCSCAVA. N-linked (GlcNAc...) asparagine glycans are attached at residues Asn-172 and Asn-416. Residue Glu-447 is the Proton donor of the active site. Residue Asn-627 is glycosylated (N-linked (GlcNAc...) asparagine).

The protein belongs to the glycosyl hydrolase 2 family. As to quaternary structure, homotetramer. In terms of processing, undergoes a post-transcriptional proteolytic cleavage near its C-terminal end, which reduces its size by approximately 3 kDa. The site of this cleavage has as yet not been determined.

The protein localises to the lysosome. The enzyme catalyses a beta-D-glucuronoside + H2O = D-glucuronate + an alcohol. Its activity is regulated as follows. Inhibited by L-aspartic acid. Functionally, plays an important role in the degradation of dermatan and keratan sulfates. The sequence is that of Beta-glucuronidase (Gusb) from Rattus norvegicus (Rat).